The chain runs to 219 residues: Elongation factor Ts, chloroplastic (219 aa).

The protein belongs to the EF-Ts family.

It localises to the plastid. It is found in the chloroplast. Its function is as follows. Associates with the EF-Tu.GDP complex and induces the exchange of GDP to GTP. It remains bound to the aminoacyl-tRNA.EF-Tu.GTP complex up to the GTP hydrolysis stage on the ribosome. The chain is Elongation factor Ts, chloroplastic (tsf) from Guillardia theta (Cryptophyte).